The following is a 29-amino-acid chain: Trypsin inhibitor 5 (29 aa).

3 disulfide bridges follow: Cys-3-Cys-20, Cys-10-Cys-22, and Cys-16-Cys-28.

The protein belongs to the protease inhibitor I7 (squash-type serine protease inhibitor) family.

The protein resides in the secreted. In terms of biological role, strongly inhibits trypsin, weakly inhibits chymotrypsin. This chain is Trypsin inhibitor 5, found in Cyclanthera pedata (Achocha).